The sequence spans 194 residues: dTTP/UTP pyrophosphatase (194 aa).

Asp73 functions as the Proton acceptor in the catalytic mechanism.

Belongs to the Maf family. YhdE subfamily. It depends on a divalent metal cation as a cofactor.

The protein localises to the cytoplasm. It catalyses the reaction dTTP + H2O = dTMP + diphosphate + H(+). The catalysed reaction is UTP + H2O = UMP + diphosphate + H(+). Nucleoside triphosphate pyrophosphatase that hydrolyzes dTTP and UTP. May have a dual role in cell division arrest and in preventing the incorporation of modified nucleotides into cellular nucleic acids. This chain is dTTP/UTP pyrophosphatase, found in Clostridium botulinum (strain ATCC 19397 / Type A).